A 656-amino-acid chain; its full sequence is Histidine decarboxylase (656 aa).

Residues tyrosine 84 and histidine 197 each coordinate substrate. Lysine 308 carries the N6-(pyridoxal phosphate)lysine modification. 2 positions are modified to phosphoserine; by PKA: serine 343 and serine 362. A disordered region spans residues 481 to 502 (HCTSQPSPRAKNLIPPPVTRDS).

It belongs to the group II decarboxylase family. In terms of assembly, homodimer. Pyridoxal 5'-phosphate is required as a cofactor. May be post-translationally processed. In terms of tissue distribution, brain, glandular regions of the stomach, mast cells and fetal liver.

It carries out the reaction L-histidine + H(+) = histamine + CO2. It functions in the pathway amine and polyamine biosynthesis; histamine biosynthesis; histamine from L-histidine: step 1/1. With respect to regulation, phosphorylation of brain HDC by cAMP-dependent protein kinase leads to enzyme inactivation. Its function is as follows. Catalyzes the biosynthesis of histamine from histidine. This is Histidine decarboxylase (Hdc) from Rattus norvegicus (Rat).